Here is a 178-residue protein sequence, read N- to C-terminus: Cytochrome b6-f complex iron-sulfur subunit (178 aa).

The helical transmembrane segment at 20–42 threads the bilayer; that stretch reads LLTFGTATGVALGALYPVANFFM. The region spanning 71–161 is the Rieske domain; that stretch reads NHPAGDRSLV…IDIDDDNVLV (91 aa). Residues Cys107, His109, Cys125, and His128 each coordinate [2Fe-2S] cluster. A disulfide bond links Cys112 and Cys127.

Belongs to the Rieske iron-sulfur protein family. As to quaternary structure, the 4 large subunits of the cytochrome b6-f complex are cytochrome b6, subunit IV (17 kDa polypeptide, PetD), cytochrome f and the Rieske protein, while the 4 small subunits are PetG, PetL, PetM and PetN. The complex functions as a dimer. Requires [2Fe-2S] cluster as cofactor.

It localises to the cellular thylakoid membrane. It carries out the reaction 2 oxidized [plastocyanin] + a plastoquinol + 2 H(+)(in) = 2 reduced [plastocyanin] + a plastoquinone + 4 H(+)(out). Functionally, component of the cytochrome b6-f complex, which mediates electron transfer between photosystem II (PSII) and photosystem I (PSI), cyclic electron flow around PSI, and state transitions. This chain is Cytochrome b6-f complex iron-sulfur subunit, found in Prochlorococcus marinus (strain SARG / CCMP1375 / SS120).